Reading from the N-terminus, the 623-residue chain is ATP-dependent zinc metalloprotease FtsH (623 aa).

Topologically, residues 1–7 (MNQSFWR) are cytoplasmic. Residues 8–28 (PLFAILLFMLVFHLTNIFFAQ) form a helical membrane-spanning segment. Residues 29–117 (QGAQVAQISY…EVSALSTETP (89 aa)) are Periplasmic-facing. Residues 118-138 (LLLNALIYVAPWVILIAIWWV) traverse the membrane as a helical segment. Over 139–623 (GMRSMRSQGP…SLNTAQAPPP (485 aa)) the chain is Cytoplasmic. 214 to 221 (GPPGTGKT) is a binding site for ATP. H435 contributes to the Zn(2+) binding site. The active site involves E436. Positions 439 and 511 each coordinate Zn(2+).

This sequence in the central section; belongs to the AAA ATPase family. The protein in the C-terminal section; belongs to the peptidase M41 family. Homohexamer. The cofactor is Zn(2+).

It is found in the cell inner membrane. Its function is as follows. Acts as a processive, ATP-dependent zinc metallopeptidase for both cytoplasmic and membrane proteins. Plays a role in the quality control of integral membrane proteins. The chain is ATP-dependent zinc metalloprotease FtsH from Pelobacter propionicus (strain DSM 2379 / NBRC 103807 / OttBd1).